Reading from the N-terminus, the 67-residue chain is Large ribosomal subunit protein bL35 (67 aa).

The protein belongs to the bacterial ribosomal protein bL35 family.

This is Large ribosomal subunit protein bL35 from Deinococcus geothermalis (strain DSM 11300 / CIP 105573 / AG-3a).